The sequence spans 341 residues: Cysteine and histidine-rich domain-containing protein 1 (341 aa).

Zn(2+)-binding residues include cysteine 5, cysteine 10, cysteine 24, histidine 27, cysteine 42, cysteine 43, cysteine 59, histidine 64, cysteine 155, cysteine 160, cysteine 174, histidine 177, cysteine 192, cysteine 193, cysteine 209, and histidine 214. CHORD domains follow at residues 5–64 (CYNK…KGPH) and 155–214 (CKNG…RGKH). A disordered region spans residues 61 to 81 (KGPHNQEKPAEPVKPEVKSSL). Over residues 64 to 81 (HNQEKPAEPVKPEVKSSL) the composition is skewed to basic and acidic residues. Positions 225 to 314 (VVPCRFDWHQ…AEPMSWARLD (90 aa)) constitute a CS domain. The interval 313 to 341 (LDLPPVAPPKEKEKEKDVDSEDECDDDED) is disordered. Residues 330-341 (VDSEDECDDDED) show a composition bias toward acidic residues.

Regulates centrosome duplication. The polypeptide is Cysteine and histidine-rich domain-containing protein 1 (chordc1) (Danio rerio (Zebrafish)).